Consider the following 314-residue polypeptide: Transcription factor DICHOTOMA (314 aa).

In terms of domain architecture, TCP spans 87-145 (KKDRHSKINRPQGPRDRRVRLSIGIARKFFDLQEMLGFDKPSKTLDWLLTKSKEAIKEL). In terms of domain architecture, R spans 201 to 218 (KESRAKARARARERTKEK).

It localises to the nucleus. Transcription regulator involved in the dorsovental asymmetry of flowers. Promotes dorsal identity. The polypeptide is Transcription factor DICHOTOMA (DICH) (Antirrhinum majus (Garden snapdragon)).